Here is a 265-residue protein sequence, read N- to C-terminus: Large ribosomal subunit protein bL9m (265 aa).

The N-terminal 49 residues, 1 to 49 (MAASVAPGVRTLWWAGAAWLRQGGIRELFRPRIEGSTPGRDFSLSHYQS), are a transit peptide targeting the mitochondrion.

The protein belongs to the bacterial ribosomal protein bL9 family. In terms of assembly, component of the mitochondrial ribosome large subunit (39S) which comprises a 16S rRNA and about 50 distinct proteins.

Its subcellular location is the mitochondrion. The sequence is that of Large ribosomal subunit protein bL9m (Mrpl9) from Mus musculus (Mouse).